Reading from the N-terminus, the 863-residue chain is Penicillin-binding protein 1A (863 aa).

At 1-28 (MTENRDNKTSQSEKTTQKKKKKKFKAFK) the chain is on the cytoplasmic side. A helical; Signal-anchor for type II membrane protein transmembrane segment spans residues 29-49 (IILITFITLIVISLVTAIGIT). The Extracellular segment spans residues 50–863 (LAIIKTSPDI…KPIIRPKKHF (814 aa)). Positions 71–248 (SKIYDDKGEL…PSVYYPYSRT (178 aa)) are transglycosylase. The Proton donor; for transglycosylase activity role is filled by glutamate 110. Positions 392-674 (ASAVLTDYHT…AAALFGKIMN (283 aa)) are transpeptidase. The active-site Acyl-ester intermediate; for transpeptidase activity is serine 431. A disordered region spans residues 774–863 (DDDMYVLPDK…KPIIRPKKHF (90 aa)). A compositionally biased stretch (polar residues) spans 808-836 (EDATNEASTEPSPNTDTVPEDSTNNLDPT). The span at 837-846 (KNTEKKPSDK) shows a compositional bias: basic and acidic residues. A compositionally biased stretch (basic residues) spans 847–863 (KNKKHVIKPIIRPKKHF).

In the N-terminal section; belongs to the glycosyltransferase 51 family. This sequence in the C-terminal section; belongs to the transpeptidase family.

It localises to the cell membrane. It catalyses the reaction [GlcNAc-(1-&gt;4)-Mur2Ac(oyl-L-Ala-gamma-D-Glu-L-Lys-D-Ala-D-Ala)](n)-di-trans,octa-cis-undecaprenyl diphosphate + beta-D-GlcNAc-(1-&gt;4)-Mur2Ac(oyl-L-Ala-gamma-D-Glu-L-Lys-D-Ala-D-Ala)-di-trans,octa-cis-undecaprenyl diphosphate = [GlcNAc-(1-&gt;4)-Mur2Ac(oyl-L-Ala-gamma-D-Glu-L-Lys-D-Ala-D-Ala)](n+1)-di-trans,octa-cis-undecaprenyl diphosphate + di-trans,octa-cis-undecaprenyl diphosphate + H(+). The enzyme catalyses Preferential cleavage: (Ac)2-L-Lys-D-Ala-|-D-Ala. Also transpeptidation of peptidyl-alanyl moieties that are N-acyl substituents of D-alanine.. It participates in cell wall biogenesis; peptidoglycan biosynthesis. Its function is as follows. Cell wall formation. Synthesis of cross-linked peptidoglycan from the lipid intermediates. The enzyme has a penicillin-insensitive transglycosylase N-terminal domain (formation of linear glycan strands) and a penicillin-sensitive transpeptidase C-terminal domain (cross-linking of the peptide subunits). This is Penicillin-binding protein 1A (pbpA) from Clostridium novyi (strain NT).